Consider the following 396-residue polypeptide: Cysteine desulfurase (396 aa).

Pyridoxal 5'-phosphate contacts are provided by residues 71-72 (GT), Asn148, Gln176, and 196-198 (SGH). Lys199 is modified (N6-(pyridoxal phosphate)lysine). A pyridoxal 5'-phosphate-binding site is contributed by Thr231. Cys319 (cysteine persulfide intermediate) is an active-site residue. Position 319 (Cys319) interacts with [2Fe-2S] cluster.

This sequence belongs to the class-V pyridoxal-phosphate-dependent aminotransferase family. NifS/IscS subfamily. In terms of assembly, homodimer. Requires pyridoxal 5'-phosphate as cofactor.

It catalyses the reaction (sulfur carrier)-H + L-cysteine = (sulfur carrier)-SH + L-alanine. Catalyzes the removal of elemental sulfur atoms from cysteine to produce alanine. Seems to participate in the biosynthesis of the nitrogenase metalloclusters by providing the inorganic sulfur required for the Fe-S core formation. The sequence is that of Cysteine desulfurase from Azotobacter chroococcum mcd 1.